The primary structure comprises 625 residues: 1-deoxy-D-xylulose-5-phosphate synthase (625 aa).

Residues H80 and 121–123 contribute to the thiamine diphosphate site; that span reads GHS. Position 152 (D152) interacts with Mg(2+). Thiamine diphosphate-binding positions include 153 to 154, N181, Y290, and E371; that span reads GA. Residue N181 coordinates Mg(2+).

This sequence belongs to the transketolase family. DXPS subfamily. In terms of assembly, homodimer. Mg(2+) is required as a cofactor. The cofactor is thiamine diphosphate.

The enzyme catalyses D-glyceraldehyde 3-phosphate + pyruvate + H(+) = 1-deoxy-D-xylulose 5-phosphate + CO2. The protein operates within metabolic intermediate biosynthesis; 1-deoxy-D-xylulose 5-phosphate biosynthesis; 1-deoxy-D-xylulose 5-phosphate from D-glyceraldehyde 3-phosphate and pyruvate: step 1/1. Its function is as follows. Catalyzes the acyloin condensation reaction between C atoms 2 and 3 of pyruvate and glyceraldehyde 3-phosphate to yield 1-deoxy-D-xylulose-5-phosphate (DXP). The chain is 1-deoxy-D-xylulose-5-phosphate synthase from Haemophilus influenzae (strain 86-028NP).